Reading from the N-terminus, the 350-residue chain is Galactokinase (350 aa).

14–17 (EHTD) is a substrate binding site. ATP-binding positions include Ser-46 and 96-102 (GAGLSSS). Positions 102 and 134 each coordinate Mg(2+). Catalysis depends on Asp-146, which acts as the Proton acceptor. Substrate is bound at residue Tyr-196.

It belongs to the GHMP kinase family. GalK subfamily.

The protein localises to the cytoplasm. It catalyses the reaction alpha-D-galactose + ATP = alpha-D-galactose 1-phosphate + ADP + H(+). Its pathway is carbohydrate metabolism; galactose metabolism. Its function is as follows. Catalyzes the transfer of the gamma-phosphate of ATP to D-galactose to form alpha-D-galactose-1-phosphate (Gal-1-P). This Thermotoga petrophila (strain ATCC BAA-488 / DSM 13995 / JCM 10881 / RKU-1) protein is Galactokinase.